Consider the following 426-residue polypeptide: Serine hydroxymethyltransferase (426 aa).

Residues L122 and G126–L128 contribute to the (6S)-5,6,7,8-tetrahydrofolate site. K231 carries the N6-(pyridoxal phosphate)lysine modification. (6S)-5,6,7,8-tetrahydrofolate contacts are provided by residues E247 and S355–F357.

It belongs to the SHMT family. In terms of assembly, homodimer. It depends on pyridoxal 5'-phosphate as a cofactor.

The protein localises to the cytoplasm. It carries out the reaction (6R)-5,10-methylene-5,6,7,8-tetrahydrofolate + glycine + H2O = (6S)-5,6,7,8-tetrahydrofolate + L-serine. Its pathway is one-carbon metabolism; tetrahydrofolate interconversion. It participates in amino-acid biosynthesis; glycine biosynthesis; glycine from L-serine: step 1/1. Catalyzes the reversible interconversion of serine and glycine with tetrahydrofolate (THF) serving as the one-carbon carrier. This reaction serves as the major source of one-carbon groups required for the biosynthesis of purines, thymidylate, methionine, and other important biomolecules. Also exhibits THF-independent aldolase activity toward beta-hydroxyamino acids, producing glycine and aldehydes, via a retro-aldol mechanism. The sequence is that of Serine hydroxymethyltransferase from Cyanothece sp. (strain PCC 7425 / ATCC 29141).